The primary structure comprises 328 residues: L-lactate dehydrogenase (328 aa).

NAD(+) is bound by residues valine 18, glutamate 39, lysine 46, tyrosine 71, and 85–86 (GA). Residues glutamine 88 and arginine 94 each coordinate substrate. NAD(+) contacts are provided by residues serine 107, 124–126 (AAN), and serine 149. Position 126 to 129 (126 to 129 (NPVD)) interacts with substrate. A substrate-binding site is contributed by 154–157 (DSAR). Beta-D-fructose 1,6-bisphosphate contacts are provided by arginine 159 and histidine 174. Histidine 181 functions as the Proton acceptor in the catalytic mechanism. Tyrosine 226 carries the post-translational modification Phosphotyrosine. Threonine 235 contributes to the substrate binding site.

It belongs to the LDH/MDH superfamily. LDH family. In terms of assembly, homotetramer.

It localises to the cytoplasm. It carries out the reaction (S)-lactate + NAD(+) = pyruvate + NADH + H(+). It participates in fermentation; pyruvate fermentation to lactate; (S)-lactate from pyruvate: step 1/1. With respect to regulation, allosterically activated by fructose 1,6-bisphosphate (FBP). Its function is as follows. Catalyzes the conversion of lactate to pyruvate. In Streptococcus thermophilus (strain ATCC BAA-250 / LMG 18311), this protein is L-lactate dehydrogenase.